The following is a 704-amino-acid chain: Elongation factor G (704 aa).

The 283-residue stretch at 8-290 (ARYRNIGISA…AVIDYLPAPT (283 aa)) folds into the tr-type G domain. Residues 17-24 (AHIDAGKT), 88-92 (DTPGH), and 142-145 (NKMD) contribute to the GTP site.

This sequence belongs to the TRAFAC class translation factor GTPase superfamily. Classic translation factor GTPase family. EF-G/EF-2 subfamily.

The protein resides in the cytoplasm. Its function is as follows. Catalyzes the GTP-dependent ribosomal translocation step during translation elongation. During this step, the ribosome changes from the pre-translocational (PRE) to the post-translocational (POST) state as the newly formed A-site-bound peptidyl-tRNA and P-site-bound deacylated tRNA move to the P and E sites, respectively. Catalyzes the coordinated movement of the two tRNA molecules, the mRNA and conformational changes in the ribosome. The protein is Elongation factor G of Pectobacterium atrosepticum (strain SCRI 1043 / ATCC BAA-672) (Erwinia carotovora subsp. atroseptica).